Reading from the N-terminus, the 90-residue chain is Probable Fe(2+)-trafficking protein (90 aa).

The protein belongs to the Fe(2+)-trafficking protein family.

Its function is as follows. Could be a mediator in iron transactions between iron acquisition and iron-requiring processes, such as synthesis and/or repair of Fe-S clusters in biosynthetic enzymes. The chain is Probable Fe(2+)-trafficking protein from Pasteurella multocida (strain Pm70).